A 628-amino-acid chain; its full sequence is Keratin, type II cytoskeletal 3 (628 aa).

Residues 1–21 are disordered; it reads MSRQASKTSGGGSQGFSGRSA. The head stretch occupies residues 1-197; that stretch reads MSRQASKTSG…DPQIGQVKAQ (197 aa). A phosphoserine mark is found at S13 and S56. Residues 198 to 233 are coil 1A; that stretch reads EREQIKTLNNKFASFIDKVRFLEQQNKVLETKWNLL. Residues 198–513 form the IF rod domain; the sequence is EREQIKTLNN…KLLEGEEYRM (316 aa). The segment at 234 to 254 is linker 1; sequence QQQGTSSISGTNNLEPLFENH. The segment at 255–346 is coil 1B; the sequence is INYLRSYLDN…TLYDAELSQM (92 aa). Position 296 is an N6,N6-dimethyllysine (K296). The tract at residues 347–370 is linker 12; it reads QSHISDTSVVLSMDNNRSLDLDSI. Phosphoserine is present on S364. The segment at 371 to 509 is coil 2; that stretch reads IAEVRAQYED…ATYRKLLEGE (139 aa). The tract at residues 510–628 is tail; it reads EYRMSGECPS…SSQSSQRYSR (119 aa). The tract at residues 605-628 is disordered; that stretch reads SSASNRGGSIKFSQSSQSSQRYSR. Positions 617–628 are enriched in low complexity; it reads SQSSQSSQRYSR.

This sequence belongs to the intermediate filament family. As to quaternary structure, heterotetramer of two type I and two type II keratins. Keratin-3 associates with keratin-12. Cornea specific.

In Homo sapiens (Human), this protein is Keratin, type II cytoskeletal 3 (KRT3).